Here is a 124-residue protein sequence, read N- to C-terminus: Small ribosomal subunit protein uS12 (124 aa).

A 3-methylthioaspartic acid modification is found at aspartate 89.

The protein belongs to the universal ribosomal protein uS12 family. In terms of assembly, part of the 30S ribosomal subunit. Contacts proteins S8 and S17. May interact with IF1 in the 30S initiation complex.

Its function is as follows. With S4 and S5 plays an important role in translational accuracy. Interacts with and stabilizes bases of the 16S rRNA that are involved in tRNA selection in the A site and with the mRNA backbone. Located at the interface of the 30S and 50S subunits, it traverses the body of the 30S subunit contacting proteins on the other side and probably holding the rRNA structure together. The combined cluster of proteins S8, S12 and S17 appears to hold together the shoulder and platform of the 30S subunit. The protein is Small ribosomal subunit protein uS12 of Shewanella loihica (strain ATCC BAA-1088 / PV-4).